A 197-amino-acid chain; its full sequence is uncharacterized protein (197 aa).

A signal peptide spans 1 to 30 (MSTYIIINIALLIAIVALIFFLSKKTKSEA).

This is an uncharacterized protein from Acanthamoeba polyphaga (Amoeba).